Here is a 509-residue protein sequence, read N- to C-terminus: MKLAYWMYAGPAHIGTLRVANSFKNVHAIMHAPLGDDYFNVMRSMLERERNFTPATASIVDRRVLGRGSQKKVVDNLLRKDKEENPDLIILTPTCTSSILQEDLQNFVDRASVISDSNIILADVDHYQVNEIQAADRTLEQVVRFYLSKQKKEKLDRFLTDVPSVNIIGIFTLGFHHQHDCRELKRLFQDLNIQINQVIPEGGSVEDLQNLPKAWLNLVPYREIGLMTAFFLKKEFGMPYLSITPMGVIDNAECIRRIEKSVNPFASIFGEKGVNYESYIDRQTRFISQAVWFSRSIDCQNFTGKQTVVFGDATHAASITKILAREMGIRVSCTGTYCKHDAEWFKEQVQDFSNEILITEDHAKVGKKIACVEPSAIFGTQMERHIGKRFDISCGVISAPVHIQNFPLGYRPFMGYEGTNQIADLVYNSFALGMEDHLLDIFGGHDMKEVITKSNPIGGLDVIWDTESQLELPQIPRFVRDKVKRETEKFAKIKGVVKITIEVMYAAKE.

Asp-36 lines the [4Fe-4S] cluster pocket. Residue Asp-298 is the Proton donor of the active site. 433-434 is a substrate binding site; that stretch reads GM.

It belongs to the ChlB/BchB/BchZ family. Protochlorophyllide reductase is composed of three subunits; ChlL, ChlN and ChlB. Forms a heterotetramer of two ChlB and two ChlN subunits. [4Fe-4S] cluster is required as a cofactor.

It is found in the plastid. Its subcellular location is the chloroplast. The catalysed reaction is chlorophyllide a + oxidized 2[4Fe-4S]-[ferredoxin] + 2 ADP + 2 phosphate = protochlorophyllide a + reduced 2[4Fe-4S]-[ferredoxin] + 2 ATP + 2 H2O. The protein operates within porphyrin-containing compound metabolism; chlorophyll biosynthesis (light-independent). Its function is as follows. Component of the dark-operative protochlorophyllide reductase (DPOR) that uses Mg-ATP and reduced ferredoxin to reduce ring D of protochlorophyllide (Pchlide) to form chlorophyllide a (Chlide). This reaction is light-independent. The NB-protein (ChlN-ChlB) is the catalytic component of the complex. This Ephedra altissima (High-climbing jointfir) protein is Light-independent protochlorophyllide reductase subunit B.